The primary structure comprises 539 residues: GMP synthase [glutamine-hydrolyzing] (539 aa).

The Glutamine amidotransferase type-1 domain maps to 4 to 202 (KILILDFGSQ…VLQIAGAKPD (199 aa)). The active-site Nucleophile is C81. Residues H176 and E178 contribute to the active site. A GMPS ATP-PPase domain is found at 203 to 395 (WIMKNHIEEA…LGLPPEMVYR (193 aa)). 230-236 (SGGVDSS) provides a ligand contact to ATP.

In terms of assembly, homodimer.

The catalysed reaction is XMP + L-glutamine + ATP + H2O = GMP + L-glutamate + AMP + diphosphate + 2 H(+). The protein operates within purine metabolism; GMP biosynthesis; GMP from XMP (L-Gln route): step 1/1. In terms of biological role, catalyzes the synthesis of GMP from XMP. This is GMP synthase [glutamine-hydrolyzing] from Burkholderia cenocepacia (strain ATCC BAA-245 / DSM 16553 / LMG 16656 / NCTC 13227 / J2315 / CF5610) (Burkholderia cepacia (strain J2315)).